Reading from the N-terminus, the 645-residue chain is Threonine--tRNA ligase (645 aa).

Residues 1–63 form the TGS domain; it reads MNQINIQFPD…EQDGAIEIIT (63 aa). A catalytic region spans residues 242–540; sequence DHRKIGKDLE…LTEETKGAFP (299 aa). Zn(2+) contacts are provided by Cys336, His387, and His517.

The protein belongs to the class-II aminoacyl-tRNA synthetase family. In terms of assembly, homodimer. Requires Zn(2+) as cofactor.

It localises to the cytoplasm. The enzyme catalyses tRNA(Thr) + L-threonine + ATP = L-threonyl-tRNA(Thr) + AMP + diphosphate + H(+). Its function is as follows. Catalyzes the attachment of threonine to tRNA(Thr) in a two-step reaction: L-threonine is first activated by ATP to form Thr-AMP and then transferred to the acceptor end of tRNA(Thr). Also edits incorrectly charged L-seryl-tRNA(Thr). This Staphylococcus epidermidis (strain ATCC 35984 / DSM 28319 / BCRC 17069 / CCUG 31568 / BM 3577 / RP62A) protein is Threonine--tRNA ligase.